The chain runs to 642 residues: A-kinase anchor protein 8-like (642 aa).

The tract at residues 1-269 (MSYTGFVQGS…MRRTWKTWTT (269 aa)) is sufficient for activation of CTE-mediated expression. Residue Arg-209 is modified to Asymmetric dimethylarginine; alternate. Arg-209 is modified (omega-N-methylarginine; alternate). Omega-N-methylarginine is present on residues Arg-218, Arg-238, and Arg-248. Lys-258 carries the N6-acetyllysine modification. The tract at residues 265–382 (KTWTTADFRT…QDKQKKRQRD (118 aa)) is disordered. Position 268 is a phosphothreonine (Thr-268). Residues 275 to 280 (KKKKRK) carry the Nuclear localization signal motif. Residues 281-297 (QGGSPDEPDSKATRTDC) carry the Nuclear export signal (NES) motif. Ser-284 bears the Phosphoserine mark. Residues 288-297 (PDSKATRTDC) are compositionally biased toward basic and acidic residues. Phosphothreonine is present on Thr-293. At Ser-298 the chain carries Phosphoserine. Positions 299–315 (DNSDSDNDEGTEGEAAE) are enriched in acidic residues. Over residues 338-350 (EDGREEGKEDPEK) the composition is skewed to basic and acidic residues. Residues 363–365 (KRK) carry the Nuclear localization signal motif. C2H2 AKAP95-type zinc fingers lie at residues 392 to 414 (CSLC…SKFH) and 485 to 508 (CAAC…TMDH). Positions 546–642 (GENPFTDNPE…EDDEEGGGGP (97 aa)) are disordered. Residues 553 to 564 (NPEEEKEQDEVE) are compositionally biased toward acidic residues. Over residues 585–605 (AQPPVPLEPAPGTTTPPPPPP) the composition is skewed to pro residues. Acidic residues predominate over residues 631–642 (DMEDDEEGGGGP).

This sequence belongs to the AKAP95 family. Interacts (via N-terminus) with DHX9 (via RGG region). Interacts with TMPO isoform Beta, PRPF40A, RNF43, lamin-B. Interacts with HDAC3; increased during mitosis. Phosphorylated on serine or threonine residues possibly by PKA.

The protein resides in the nucleus. Its subcellular location is the nucleus matrix. The protein localises to the nucleus speckle. It is found in the PML body. It localises to the cytoplasm. Could play a role in constitutive transport element (CTE)-mediated gene expression by association with DHX9. Increases CTE-dependent nuclear unspliced mRNA export. Proposed to target PRKACA to the nucleus but does not seem to be implicated in the binding of regulatory subunit II of PKA. May be involved in nuclear envelope breakdown and chromatin condensation. May be involved in anchoring nuclear membranes to chromatin in interphase and in releasing membranes from chromating at mitosis. May regulate the initiation phase of DNA replication when associated with TMPO isoform Beta. Required for cell cycle G2/M transition and histone deacetylation during mitosis. In mitotic cells recruits HDAC3 to the vicinity of chromatin leading to deacetylation and subsequent phosphorylation at 'Ser-10' of histone H3; in this function seems to act redundantly with AKAP8. May be involved in regulation of pre-mRNA splicing. The protein is A-kinase anchor protein 8-like (Akap8l) of Mus musculus (Mouse).